The primary structure comprises 35 residues: Hemocyanin A chain (35 aa).

It belongs to the tyrosinase family. Hemocyanin subfamily. In terms of tissue distribution, hemolymph.

The protein resides in the secreted. The protein localises to the extracellular space. Hemocyanins are copper-containing oxygen carriers occurring freely dissolved in the hemolymph of many mollusks and arthropods. The chain is Hemocyanin A chain from Cherax destructor (Common yabby crayfish).